The chain runs to 139 residues: Maximins 4/H3 type 5 (139 aa).

An N-terminal signal peptide occupies residues 1-18 (MNFKYIFAVSFLIASAYA). Residues 19–43 (RSVQNDEQSLSQRDVLEEESLREIR) constitute a propeptide that is removed on maturation. An Asparagine amide modification is found at asparagine 70. A propeptide spanning residues 74–118 (TAEEHEVMKRLEAVMRDLDSLDHPEEASERETRGFNQDEIAKEKR) is cleaved from the precursor. The residue at position 138 (isoleucine 138) is an Isoleucine amide.

Belongs to the bombinin family. In terms of tissue distribution, expressed by the skin glands.

It is found in the secreted. In terms of biological role, maximin-4 shows antibacterial activity against both Gram-positive and Gram-negative bacteria. It also shows antimicrobial activity against the fungus C.albicans, but not against A.flavus nor P.uticale. It has little hemolytic activity. It does not possess a significant cytotoxicity against tumor cell lines. It does not possess a significant anti-HIV activity. Its function is as follows. Maximin-H3 shows antibacterial activity against both Gram-positive and Gram-negative bacteria. It also shows antimicrobial activity against the fungus C.albicans. Shows strong hemolytic activity. The polypeptide is Maximins 4/H3 type 5 (Bombina maxima (Giant fire-bellied toad)).